The following is a 70-amino-acid chain: ATP synthase subunit c (70 aa).

The next 2 helical transmembrane spans lie at 3–23 (FIAA…GNGM) and 47–67 (FIGV…AFML).

It belongs to the ATPase C chain family. F-type ATPases have 2 components, F(1) - the catalytic core - and F(0) - the membrane proton channel. F(1) has five subunits: alpha(3), beta(3), gamma(1), delta(1), epsilon(1). F(0) has three main subunits: a(1), b(2) and c(10-14). The alpha and beta chains form an alternating ring which encloses part of the gamma chain. F(1) is attached to F(0) by a central stalk formed by the gamma and epsilon chains, while a peripheral stalk is formed by the delta and b chains.

It is found in the cell membrane. F(1)F(0) ATP synthase produces ATP from ADP in the presence of a proton or sodium gradient. F-type ATPases consist of two structural domains, F(1) containing the extramembraneous catalytic core and F(0) containing the membrane proton channel, linked together by a central stalk and a peripheral stalk. During catalysis, ATP synthesis in the catalytic domain of F(1) is coupled via a rotary mechanism of the central stalk subunits to proton translocation. Functionally, key component of the F(0) channel; it plays a direct role in translocation across the membrane. A homomeric c-ring of between 10-14 subunits forms the central stalk rotor element with the F(1) delta and epsilon subunits. The polypeptide is ATP synthase subunit c (Lacticaseibacillus casei (strain BL23) (Lactobacillus casei)).